The sequence spans 93 residues: Large ribosomal subunit protein uL23 (93 aa).

This sequence belongs to the universal ribosomal protein uL23 family. In terms of assembly, part of the 50S ribosomal subunit. Contacts protein L29, and trigger factor when it is bound to the ribosome.

Its function is as follows. One of the early assembly proteins it binds 23S rRNA. One of the proteins that surrounds the polypeptide exit tunnel on the outside of the ribosome. Forms the main docking site for trigger factor binding to the ribosome. The chain is Large ribosomal subunit protein uL23 from Aliarcobacter butzleri (strain RM4018) (Arcobacter butzleri).